The following is a 209-amino-acid chain: Eukaryotic translation initiation factor isoform 4E-2 (209 aa).

Residues 1–29 (MAEVEAALPVAATETPEVAAEGDAGAAEA) form a disordered region. The span at 9–29 (PVAATETPEVAAEGDAGAAEA) shows a compositional bias: low complexity. Residues 51-56 (PGAAWG), Lys83, and 101-102 (WE) each bind mRNA. Cysteines 106 and 145 form a disulfide. Residues 152 to 157 (RQRQDK) and 197 to 200 (RSQK) contribute to the mRNA site.

Belongs to the eukaryotic initiation factor 4E family. EIF4F is a multi-subunit complex, the composition of which varies with external and internal environmental conditions. It is composed of at least EIF4A, EIF4E and EIF4G. EIF4E is also known to interact with other partners. In higher plants two isoforms of EIF4F have been identified, named isoform EIF4F and isoform EIF(iso)4F. Isoform EIF4F has subunits p220 and p26, whereas isoform EIF(iso)4F has subunits p82 and p28. According to the redox status, the Cys-106-Cys-145 disulfide bridge may have a role in regulating protein function by affecting its ability to bind capped mRNA.

Its subcellular location is the cytoplasm. It localises to the nucleus. Its function is as follows. Component of the protein complex eIF4F, which is involved in the recognition of the mRNA cap, ATP-dependent unwinding of 5'-terminal secondary structure and recruitment of mRNA to the ribosome. Recognizes and binds the 7-methylguanosine-containing mRNA cap during an early step in the initiation of protein synthesis and facilitates ribosome binding by inducing the unwinding of the mRNAs secondary structures. The protein is Eukaryotic translation initiation factor isoform 4E-2 of Triticum aestivum (Wheat).